A 392-amino-acid polypeptide reads, in one-letter code: MKCCDNIDARMVDETSINLDPIQVGGRLTPEAMKAMISWGDGYSVCDNCRKPFRLDYIEKPPLKDFHVDVAEWLGMAQARTVPGARRGFQQVAGTYVEKGDPVLIGALAHYTSYLSVELQKGIVREIPKTADNHITAEDTANRIEDVVREFGIAPKLLYIDHVDYQFGNMHDVKGIAKVAHQYDIPVLYNGVYTVGIMPVNGKDLGVDFIIGSGHKSMAAPAPSGILAATEERANEVFRTTQMEGDLTGRKFGIKEVGILGCSLMGAPIVGLLASFPTVKARVEHFDEELANSKIVVEALRFIEGTKILSEYPRKHTLTRVDTTGSFDQVAQTHKKRGFFLSSALGKKGITGIIPGATKVWKFNTYGMTKKQAEYVADTYLEIAETNGLTIN.

Pyridoxal 5'-phosphate-binding positions include 85–86 (AR), Asn190, and 213–215 (SGH). Lys216 bears the N6-(pyridoxal phosphate)lysine mark.

The protein belongs to the SepCysS family. In terms of assembly, homodimer. Interacts with SepRS. The cofactor is pyridoxal 5'-phosphate.

It carries out the reaction O-phospho-L-seryl-tRNA(Cys) + hydrogen sulfide + H(+) = L-cysteinyl-tRNA(Cys) + phosphate. Converts O-phospho-L-seryl-tRNA(Cys) (Sep-tRNA(Cys)) to L-cysteinyl-tRNA(Cys) (Cys-tRNA(Cys)). This is O-phospho-L-seryl-tRNA:Cys-tRNA synthase 1 from Methanocorpusculum labreanum (strain ATCC 43576 / DSM 4855 / Z).